Consider the following 310-residue polypeptide: Pantothenate kinase (310 aa).

Residue 95 to 102 coordinates ATP; sequence GSVAVGKS.

It belongs to the prokaryotic pantothenate kinase family.

It is found in the cytoplasm. It catalyses the reaction (R)-pantothenate + ATP = (R)-4'-phosphopantothenate + ADP + H(+). It participates in cofactor biosynthesis; coenzyme A biosynthesis; CoA from (R)-pantothenate: step 1/5. The protein is Pantothenate kinase of Rhodococcus opacus (strain B4).